We begin with the raw amino-acid sequence, 591 residues long: Nuclear receptor subfamily 4 group A member 2 (591 aa).

Disordered regions lie at residues 1-22 and 110-133; these read MPCVQAQYGSSPQGASPASQSY and SEEMMSHSGSVYYKPSSPPTSSTP. Positions 8–22 are enriched in low complexity; sequence YGSSPQGASPASQSY. A DNA-binding region (nuclear receptor) is located at residues 253–328; sequence EGLCAVCGDN…VGMVKEVVRT (76 aa). 2 NR C4-type zinc fingers span residues 256–276 and 292–311; these read CAVCGDNAACQHYGVRTCEGC and CLANKNCPVDKRRRNRCQYC. Residues 280-307 carry the Bipartite nuclear localization signal (NLS1) motif; sequence FKRTVQKNAKYVCLANKNCPVDKRRRNR. A disordered region spans residues 330 to 354; that stretch reads SLKGRRGRLPSKPKSPQEPSPPSPP. A Nuclear localization signal (NLS1) motif is present at residues 331–343; that stretch reads LKGRRGRLPSKPK. Positions 345-354 are enriched in pro residues; it reads PQEPSPPSPP. Residues 353–588 enclose the NR LBD domain; sequence PPVSLISALV…AIIDKLFLDT (236 aa). A nuclear export sequence (NES1) motif is present at residues 436–445; it reads FLELFVLRLA. Residues 561 to 570 carry the nuclear export sequence (NES2) motif; it reads QGLQRIFYLK.

This sequence belongs to the nuclear hormone receptor family.

Its subcellular location is the cytoplasm. The protein resides in the nucleus. Its function is as follows. Transcriptional regulator which may play a role in the differentiation and maintenance of meso-diencephalic dopaminergic (mdDA) neurons. The polypeptide is Nuclear receptor subfamily 4 group A member 2 (nr4a2) (Xenopus tropicalis (Western clawed frog)).